A 340-amino-acid polypeptide reads, in one-letter code: RNA 3'-terminal phosphate cyclase (340 aa).

Residues Gln102 and 284-288 (FLGDQ) contribute to the ATP site. The active-site Tele-AMP-histidine intermediate is the His308.

The protein belongs to the RNA 3'-terminal cyclase family. Type 1 subfamily.

The protein localises to the cytoplasm. It catalyses the reaction a 3'-end 3'-phospho-ribonucleotide-RNA + ATP = a 3'-end 2',3'-cyclophospho-ribonucleotide-RNA + AMP + diphosphate. Functionally, catalyzes the conversion of 3'-phosphate to a 2',3'-cyclic phosphodiester at the end of RNA. The mechanism of action of the enzyme occurs in 3 steps: (A) adenylation of the enzyme by ATP; (B) transfer of adenylate to an RNA-N3'P to produce RNA-N3'PP5'A; (C) and attack of the adjacent 2'-hydroxyl on the 3'-phosphorus in the diester linkage to produce the cyclic end product. The biological role of this enzyme is unknown but it is likely to function in some aspects of cellular RNA processing. The polypeptide is RNA 3'-terminal phosphate cyclase (Thermococcus onnurineus (strain NA1)).